The following is a 990-amino-acid chain: MDNQAVVDLAIVVDATGSMGTFLSSLSESLQQIVQIIDITNVIQNINIIMYRDYCDSVITASSGWVSKIDDLIPFIRGLRASGGGDTPEAGKTAANNLLDVVKNNTIVIWYADAPPHHKSNARDNFAREINTLIGSDKIFDWIELCDTLAARNIIVYPIINRHHFDTSSFYVAMSTITGGKTLYLESTNEKIITQTTIKLLLSLMGCDNEFKSGVKELVYGSEFNRSSILDENNNAGYLPGTRSSILVNTVDLQVQTHPWLITNLRSLVSLFNADSHYKDKIFAVFKSLMKPTSVLSLTYNTIFATFWRLICRTYDDPRKEVLKEQMSVVLENLKKTNREDHVVVTEWISDSYNQTYEVNDIIKTKAVSKVPALVLDTTRFYLPQEILELSRTCNAKVLSTVVDMLSSIRLIEKEEDLPKTNEQELDSKGRPIPLKYIPLSLPNKYLFSILPHLIAPGSNFSLRPSMILATVAYITNNQILKDRAKNHLEYHKGKWIDQSLPENYTGGFINLMLRVPEFLTDEEISFFKFYQKVFGLLINGSTELDIDMPFTPYKKVCNDFKRECDHCHHIRSFTLLTIDDDGKYKCGLCHSPADDDTDTLNRVYTIISCDTPGETGMTISKDTTLGPSSKEHQDDYHSVYLECKSCLCHYALVNVDKMNVTPKCYGCRFDVYLPNVKCIICTNKYVDPAKIYSDNSETFVCPQCVSDPRSSIDILKVKFKDIYLQNKSTIHSLVGFEMPSDINVFGGHSIFSIKDKINILDHTENPTSLVFNRKFMLNAPIVIIEMLKWINSGSAEKGLCMICFNEFSKSNLRQICGRKVCQSVACYDCMKSWYGENKVGDLIHVNALTCPFCKQCPMFNILAAFNRQVCAMVRTNNSFDIDWWYGWCLKCFQPKKVVEKECSEDAPQLGGKFICEECSNVKPENSKECPNSLCKIPIIKDGGCNHMECTACKKHFCWLCANVSYETSEETYDHLYKIHGGAFEYDQDD.

The 194-residue stretch at 8–201 (DLAIVVDATG…IITQTTIKLL (194 aa)) folds into the VWFA domain. A TRIAD supradomain region spans residues 797–990 (EKGLCMICFN…GGAFEYDQDD (194 aa)). The Zn(2+) site is built by Cys801, Cys804, Cys827, and Cys830. The RING-type 1 zinc finger occupies 801–854 (CMICFNEFSKSNLRQICGRKVCQSVACYDCMKSWYGENKVGDLIHVNALTCPFC). The IBR-type zinc finger occupies 855–903 (KQCPMFNILAAFNRQVCAMVRTNNSFDIDWWYGWCLKCFQPKKVVEKEC). Cys930 and Cys935 together coordinate Zn(2+). The RING-type 2; atypical zinc finger occupies 930-961 (CPNSLCKIPIIKDGGCNHMECTACKKHFCWLC). Cys945 is a catalytic residue. Positions 950 and 953 each coordinate Zn(2+).

The polypeptide is Putative ariadne-like RING finger protein R811 (Acanthamoeba polyphaga (Amoeba)).